The sequence spans 394 residues: Elongation factor Tu (394 aa).

The region spanning 10–204 (KPHVNVGTIG…ALDTYIPEPE (195 aa)) is the tr-type G domain. The G1 stretch occupies residues 19 to 26 (GHVDHGKT). A GTP-binding site is contributed by 19–26 (GHVDHGKT). A Mg(2+)-binding site is contributed by Thr26. The G2 stretch occupies residues 60–64 (GITIA). The tract at residues 81 to 84 (DCPG) is G3. GTP is bound by residues 81-85 (DCPGH) and 136-139 (NKCD). Residues 136–139 (NKCD) are G4. A G5 region spans residues 174–176 (SAL).

The protein belongs to the TRAFAC class translation factor GTPase superfamily. Classic translation factor GTPase family. EF-Tu/EF-1A subfamily. As to quaternary structure, monomer.

The protein resides in the cytoplasm. The catalysed reaction is GTP + H2O = GDP + phosphate + H(+). In terms of biological role, GTP hydrolase that promotes the GTP-dependent binding of aminoacyl-tRNA to the A-site of ribosomes during protein biosynthesis. The polypeptide is Elongation factor Tu (Vibrio parahaemolyticus serotype O3:K6 (strain RIMD 2210633)).